Consider the following 56-residue polypeptide: Serine protease inhibitor Kazal-type 1 (56 aa).

The Kazal-like domain occupies 3-56 (PQREATCTSEVSGCPKIYNPVCGTDGITYSNECVLCSENKKRQTPVLIQKSGPC). 3 disulfides stabilise this stretch: cysteine 9-cysteine 38, cysteine 16-cysteine 35, and cysteine 24-cysteine 56.

It is found in the secreted. In terms of biological role, serine protease inhibitor which exhibits anti-trypsin activity. In the pancreas, protects against trypsin-catalyzed premature activation of zymogens. Its function is as follows. In the male reproductive tract, binds to sperm heads where it modulates sperm capacitance by inhibiting calcium uptake and nitrogen oxide (NO) production. This is Serine protease inhibitor Kazal-type 1 (SPINK1) from Sus scrofa (Pig).